The following is a 238-amino-acid chain: Uracil-DNA glycosylase (238 aa).

The active-site Proton acceptor is the Asp-81.

It belongs to the uracil-DNA glycosylase (UDG) superfamily. UNG family.

It is found in the cytoplasm. It carries out the reaction Hydrolyzes single-stranded DNA or mismatched double-stranded DNA and polynucleotides, releasing free uracil.. Excises uracil residues from the DNA which can arise as a result of misincorporation of dUMP residues by DNA polymerase or due to deamination of cytosine. This chain is Uracil-DNA glycosylase, found in Corynebacterium efficiens (strain DSM 44549 / YS-314 / AJ 12310 / JCM 11189 / NBRC 100395).